We begin with the raw amino-acid sequence, 489 residues long: N-succinylglutamate 5-semialdehyde dehydrogenase (489 aa).

Gly-221 to Gly-226 is an NAD(+) binding site. Active-site residues include Glu-244 and Cys-278.

It belongs to the aldehyde dehydrogenase family. AstD subfamily.

The catalysed reaction is N-succinyl-L-glutamate 5-semialdehyde + NAD(+) + H2O = N-succinyl-L-glutamate + NADH + 2 H(+). Its pathway is amino-acid degradation; L-arginine degradation via AST pathway; L-glutamate and succinate from L-arginine: step 4/5. In terms of biological role, catalyzes the NAD-dependent reduction of succinylglutamate semialdehyde into succinylglutamate. In Sorangium cellulosum (strain So ce56) (Polyangium cellulosum (strain So ce56)), this protein is N-succinylglutamate 5-semialdehyde dehydrogenase.